Reading from the N-terminus, the 599-residue chain is Aspartate--tRNA(Asp/Asn) ligase (599 aa).

An L-aspartate-binding site is contributed by Glu169. Positions 193–196 are aspartate; it reads QLFK. Arg215 is a binding site for L-aspartate. ATP contacts are provided by residues 215-217 and Gln224; that span reads RDE. Residue His447 participates in L-aspartate binding. Glu481 provides a ligand contact to ATP. Arg488 contacts L-aspartate. Residue 533–536 participates in ATP binding; it reads GWDR.

Belongs to the class-II aminoacyl-tRNA synthetase family. Type 1 subfamily. Homodimer.

The protein localises to the cytoplasm. It carries out the reaction tRNA(Asx) + L-aspartate + ATP = L-aspartyl-tRNA(Asx) + AMP + diphosphate. In terms of biological role, aspartyl-tRNA synthetase with relaxed tRNA specificity since it is able to aspartylate not only its cognate tRNA(Asp) but also tRNA(Asn). Reaction proceeds in two steps: L-aspartate is first activated by ATP to form Asp-AMP and then transferred to the acceptor end of tRNA(Asp/Asn). The sequence is that of Aspartate--tRNA(Asp/Asn) ligase from Pseudarthrobacter chlorophenolicus (strain ATCC 700700 / DSM 12829 / CIP 107037 / JCM 12360 / KCTC 9906 / NCIMB 13794 / A6) (Arthrobacter chlorophenolicus).